Consider the following 773-residue polypeptide: Tyrosine kinase receptor Cad96Ca (773 aa).

An N-terminal signal peptide occupies residues 1 to 48; it reads MVYHHHNHESRIIHCRKQLTSWRRRSLLLTIIVVTATVVSLISQEAEA. Residues 49-315 are Extracellular-facing; it reads HNQNAPPILY…ITIFSLKSGT (267 aa). Positions 58-172 constitute a Cadherin domain; that stretch reads YVRERNWRIS…ENSSGYRPQT (115 aa). N-linked (GlcNAc...) asparagine glycans are attached at residues Asn-126, Asn-164, and Asn-180. Residues 196 to 302 form a disordered region; it reads SIRNGLPNSR…TPSGGHHNNS (107 aa). Positions 209–235 are enriched in pro residues; the sequence is WYPPVPQNNIFGPPPFGNNYPPPPPNI. A compositionally biased stretch (acidic residues) spans 243–253; the sequence is SGEEEQPDEEV. Composition is skewed to polar residues over residues 254–283 and 290–302; these read TPTT…STRV and ETTT…HNNS. 4 N-linked (GlcNAc...) asparagine glycosylation sites follow: Asn-278, Asn-279, Asn-300, and Asn-301. A helical transmembrane segment spans residues 316–336; it reads IPIVVTVGGFFVAIAVLLAYL. At 337-773 the chain is on the cytoplasmic side; it reads CRRRLCAISR…NIVSLSGEKL (437 aa). 2 disordered regions span residues 352–373 and 411–447; these read KEKE…LTDD and TGVT…AGSS. Polar residues predominate over residues 361 to 373; it reads SNQSQLSSTLTDD. The span at 411–433 shows a compositional bias: low complexity; it reads TGVTNGGVSSPGVPSPGTGEPGS. The 280-residue stretch at 470 to 749 folds into the Protein kinase domain; that stretch reads LKFFNILGEG…MLDKLLHTEM (280 aa). Residues 476–484 and Lys-504 each bind ATP; that span reads LGEGAFGQV. The Proton acceptor role is filled by Asp-610.

Belongs to the protein kinase superfamily. Tyr protein kinase family. Fibroblast growth factor receptor subfamily.

Its subcellular location is the membrane. It carries out the reaction L-tyrosyl-[protein] + ATP = O-phospho-L-tyrosyl-[protein] + ADP + H(+). The sequence is that of Tyrosine kinase receptor Cad96Ca (Cad96Ca) from Drosophila melanogaster (Fruit fly).